The following is a 337-amino-acid chain: Large ribosomal subunit protein uL3 (337 aa).

The disordered stretch occupies residues 1 to 20 (MASIHRPKRGSLAFSPRKRA).

Belongs to the universal ribosomal protein uL3 family. Part of the 50S ribosomal subunit. Forms a cluster with proteins L14 and L24e.

In terms of biological role, one of the primary rRNA binding proteins, it binds directly near the 3'-end of the 23S rRNA, where it nucleates assembly of the 50S subunit. This Methanosarcina acetivorans (strain ATCC 35395 / DSM 2834 / JCM 12185 / C2A) protein is Large ribosomal subunit protein uL3.